A 147-amino-acid chain; its full sequence is Large ribosomal subunit protein bL9 (147 aa).

It belongs to the bacterial ribosomal protein bL9 family.

Functionally, binds to the 23S rRNA. The polypeptide is Large ribosomal subunit protein bL9 (Marinomonas sp. (strain MWYL1)).